The primary structure comprises 1137 residues: Voltage-dependent calcium channel subunit alpha-2/delta-4 (1137 aa).

The N-terminal stretch at 1-19 is a signal peptide; it reads MVCGCSALLPLPNPRPTMP. Residues 20–1115 are Extracellular-facing; the sequence is ATPNFLANPS…AQDCGGASDT (1096 aa). N-linked (GlcNAc...) asparagine glycosylation occurs at Asn201. The VWFA domain maps to 291–473; sequence DIVILVDVSG…ENVMEYLHVL (183 aa). 3 residues coordinate a divalent metal cation: Asp297, Ser299, and Ser301. The MIDAS-like motif signature appears at 297–301; sequence DVSGS. Cys447 and Cys1097 form a disulfide bridge. Residues 487–580 enclose the Cache domain; that stretch reads WTEAYMDSKL…RPLYREGKKL (94 aa). An N-linked (GlcNAc...) asparagine glycan is attached at Asn664. A helical transmembrane segment spans residues 1116-1136; the sequence is SASPPLLLLPVCAWGLLPQLL. Arg1137 is a topological domain (cytoplasmic).

This sequence belongs to the calcium channel subunit alpha-2/delta family. In terms of assembly, dimer formed of alpha-2-2 and delta-2 chains; disulfide-linked. Voltage-dependent calcium channels are multisubunit complexes, consisting of alpha-1 (CACNA1), alpha-2 (CACNA2D), beta (CACNB) and delta (CACNA2D) subunits in a 1:1:1:1 ratio. Interacts with CACNA1C and CACNB3. May be proteolytically processed into subunits alpha-2-4 and delta-4 that are disulfide-linked. It is however unclear whether such cleavage really takes place in vivo and has a functional role. Predominantly expressed in certain types of endocrine cells. Present in the Paneth cells of the small intestine. Also present in the erythroblasts in the fetal liver, in the cells of the zona reticularis of the adrenal gland and in the basophils of the pituitary. Present at low level in some brain regions such as the cerebellum (at protein level).

It localises to the membrane. In terms of biological role, the alpha-2/delta subunit of voltage-dependent calcium channels regulates calcium current density and activation/inactivation kinetics of the calcium channel. The protein is Voltage-dependent calcium channel subunit alpha-2/delta-4 (CACNA2D4) of Homo sapiens (Human).